A 361-amino-acid chain; its full sequence is Putative F-box protein At1g33010 (361 aa).

The 47-residue stretch at glycine 4 to proline 50 folds into the F-box domain. The interval serine 308–glutamine 339 is disordered.

This Arabidopsis thaliana (Mouse-ear cress) protein is Putative F-box protein At1g33010.